Here is a 244-residue protein sequence, read N- to C-terminus: Carboxy-S-adenosyl-L-methionine synthase (244 aa).

S-adenosyl-L-methionine-binding positions include tyrosine 40, 65 to 67 (GCS), 90 to 91 (DN), 119 to 120 (DI), asparagine 134, and arginine 201.

Belongs to the class I-like SAM-binding methyltransferase superfamily. Cx-SAM synthase family. As to quaternary structure, homodimer.

The enzyme catalyses prephenate + S-adenosyl-L-methionine = carboxy-S-adenosyl-L-methionine + 3-phenylpyruvate + H2O. Its function is as follows. Catalyzes the conversion of S-adenosyl-L-methionine (SAM) to carboxy-S-adenosyl-L-methionine (Cx-SAM). This is Carboxy-S-adenosyl-L-methionine synthase from Geobacter sp. (strain M21).